The sequence spans 346 residues: dTDP-glucose 4,6-dehydratase (346 aa).

NAD(+) is bound by residues 17-18 (FI), 38-41 (DKLT), 64-65 (DI), 86-90 (LAAES), and Thr105. Ser90 provides a ligand contact to substrate. Thr139 provides a ligand contact to substrate. Asp140 acts as the Proton donor in catalysis. Catalysis depends on proton acceptor residues Glu141 and Tyr165. 165-169 (YSASK) is an NAD(+) binding site. A substrate-binding site is contributed by Asn194. Position 195 (Asn195) interacts with NAD(+). Substrate is bound by residues 204–205 (KL), 220–222 (PVY), Arg229, Asn264, and 298–302 (DRPGH).

This sequence belongs to the NAD(P)-dependent epimerase/dehydratase family. dTDP-glucose dehydratase subfamily. Homodimer. It depends on NAD(+) as a cofactor.

It catalyses the reaction dTDP-alpha-D-glucose = dTDP-4-dehydro-6-deoxy-alpha-D-glucose + H2O. Its pathway is carbohydrate biosynthesis; dTDP-L-rhamnose biosynthesis. The protein operates within bacterial outer membrane biogenesis; LPS O-antigen biosynthesis. In terms of biological role, catalyzes the dehydration of dTDP-D-glucose to form dTDP-6-deoxy-D-xylo-4-hexulose via a three-step process involving oxidation, dehydration and reduction. The sequence is that of dTDP-glucose 4,6-dehydratase from Neisseria gonorrhoeae.